Consider the following 84-residue polypeptide: Cell division topological specificity factor (84 aa).

Belongs to the MinE family.

Prevents the cell division inhibition by proteins MinC and MinD at internal division sites while permitting inhibition at polar sites. This ensures cell division at the proper site by restricting the formation of a division septum at the midpoint of the long axis of the cell. This is Cell division topological specificity factor from Burkholderia multivorans (strain ATCC 17616 / 249).